The sequence spans 334 residues: MIKKLNIFSGMQPSGIPTLGNYIGVLRQWKILQKIYNSIYCIADLHYLTNNKENSKILFKRSLDLLAIYLACDIDPNESVIFLQSHIPEHSQLSWILNCYTYFGELTRMVQFKEKIKNKKNINLGLLSYPVLMASDILLYQTDIVPVGKDQIQHLELSRTIARRFNKLHGDVFIIPEKIISKTGSKIMSLSNPNKKMSKSNLNRNNFISLLDQPYSIIEKIKNAKTDSDNPPKINFDIIKKPGISNLLSIISELRGINIKDLEISFKNKSYKYLKNEVTGAVLEHLKILQKKYFLIRKDEKYLINILKSGSKKAKKIARGTLKKVNESIGLLNF.

Residues glutamine 12 to serine 14 and glycine 20 to asparagine 21 each bind ATP. Positions proline 13–asparagine 21 match the 'HIGH' region motif. Aspartate 136 is an L-tryptophan binding site. ATP contacts are provided by residues glycine 148–aspartate 150, isoleucine 187, and lysine 196–serine 200. The 'KMSKS' region signature appears at lysine 196–serine 200.

Belongs to the class-I aminoacyl-tRNA synthetase family. In terms of assembly, homodimer.

It is found in the cytoplasm. It catalyses the reaction tRNA(Trp) + L-tryptophan + ATP = L-tryptophyl-tRNA(Trp) + AMP + diphosphate + H(+). Functionally, catalyzes the attachment of tryptophan to tRNA(Trp). In Wigglesworthia glossinidia brevipalpis, this protein is Tryptophan--tRNA ligase.